The following is a 218-amino-acid chain: Putative glutamine transport system permease protein GlnP (218 aa).

In terms of domain architecture, ABC transmembrane type-1 spans 19 to 208; it reads TLVTLKYSII…ILVMLISFIA (190 aa). Helical transmembrane passes span 25–45, 57–79, 86–108, and 187–207; these read YSII…ICKV, FYTS…FAAP, FSVF…SEVI, and FFPM…ISFI.

This sequence belongs to the binding-protein-dependent transport system permease family. HisMQ subfamily.

The protein resides in the cell inner membrane. In terms of biological role, part of the binding-protein-dependent transport system for glutamine; probably responsible for the translocation of the substrate across the membrane. This is Putative glutamine transport system permease protein GlnP (glnP) from Rickettsia typhi (strain ATCC VR-144 / Wilmington).